A 1398-amino-acid chain; its full sequence is DNA-directed RNA polymerase subunit beta' (1398 aa).

Zn(2+) is bound by residues Cys-73, Cys-75, Cys-88, and Cys-91. Residues Asp-464, Asp-466, and Asp-468 each contribute to the Mg(2+) site. Zn(2+) is bound by residues Cys-823, Cys-897, Cys-904, and Cys-907.

It belongs to the RNA polymerase beta' chain family. As to quaternary structure, the RNAP catalytic core consists of 2 alpha, 1 beta, 1 beta' and 1 omega subunit. When a sigma factor is associated with the core the holoenzyme is formed, which can initiate transcription. Mg(2+) serves as cofactor. It depends on Zn(2+) as a cofactor.

It catalyses the reaction RNA(n) + a ribonucleoside 5'-triphosphate = RNA(n+1) + diphosphate. In terms of biological role, DNA-dependent RNA polymerase catalyzes the transcription of DNA into RNA using the four ribonucleoside triphosphates as substrates. The polypeptide is DNA-directed RNA polymerase subunit beta' (Gluconacetobacter diazotrophicus (strain ATCC 49037 / DSM 5601 / CCUG 37298 / CIP 103539 / LMG 7603 / PAl5)).